The sequence spans 349 residues: Cyclic AMP-dependent transcription factor ATF-4 (349 aa).

Disordered stretches follow at residues Phe-49–Glu-75, Pro-204–Val-271, and Lys-279–Arg-298. Residue Pro-60 is modified to 4-hydroxyproline. At Thr-212 the chain carries Phosphothreonine. 5 positions are modified to phosphoserine: Ser-214, Ser-218, Ser-223, Ser-230, and Ser-234. Positions Ser-214–Ser-223 match the BetaTrCP degron motif motif. The segment covering Gly-229 to Arg-239 has biased composition (polar residues). Pro-235 is subject to 4-hydroxyproline. Ser-247 carries the post-translational modification Phosphoserine. Ser-251 is modified (phosphoserine; by RPS6KA3). Residues Lys-258 and Lys-270 each participate in a glycyl lysine isopeptide (Lys-Gly) (interchain with G-Cter in SUMO2) cross-link. The bZIP domain maps to Leu-276–Val-339. The basic motif stretch occupies residues Lys-278–Arg-298. The segment at Ala-303–Val-339 is interaction with GABBR1. The leucine-zipper stretch occupies residues Leu-304–Leu-332. Lys-309 bears the N6-acetyllysine mark.

This sequence belongs to the bZIP family. As to quaternary structure, binds DNA as a homodimer and as a heterodimer. Heterodimer; heterodimerizes with CEBPB. Heterodimer; heterodimerizes with DDIT3/CHOP. Interacts with CEP290 (via an N-terminal region). Interacts with NEK6, DAPK2 (isoform 2) and ZIPK/DAPK3. Interacts (via its leucine zipper domain) with GABBR1 and GABBR2 (via their C-termini). Forms a heterodimer with TXLNG in osteoblasts. Interacts (via its DNA binding domain) with FOXO1 (C-terminal half); the interaction occurs in osteoblasts and regulates glucose homeostasis through suppression of beta-cell proliferation and a decrease in insulin production. Interacts with SATB2; the interaction results in enhanced DNA binding and transactivation by these transcription factors. Interacts with ABRAXAS2. Interacts with TRIB3, inhibiting the transactivation activity of ATF4. Interacts with DISC1; which inhibits ATF4 transcription factor activity by disrupting ATF4 dimerization and DNA-binding. Interacts with EP300/p300; EP300/p300 stabilizes ATF4 and increases its transcriptional activity independently of its catalytic activity by preventing its ubiquitination. Post-translationally, ubiquitinated by SCF(BTRC) in response to mTORC1 signal, followed by proteasomal degradation and leading to down-regulate expression of SIRT4. Interaction with EP300/p300 inhibits ubiquitination by SCF(BTRC). In terms of processing, phosphorylation at Ser-251 by RPS6KA3/RSK2 in osteoblasts enhances transactivation activity and promotes osteoblast differentiation. Phosphorylated on the betaTrCP degron motif at Ser-218, followed by phosphorylation at Thr-212, Ser-223, Ser-230, Ser-234 and Ser-247, promoting interaction with BTRC and ubiquitination. Phosphorylation is promoted by mTORC1. Phosphorylation at Ser-214 by CK2 decreases its stability. Phosphorylated by NEK6. Hydroxylated by PHD3, leading to decreased protein stability. In terms of tissue distribution, ubiquitously expressed in adults.

It localises to the nucleus. It is found in the nucleus speckle. The protein localises to the cytoplasm. Its subcellular location is the cell membrane. The protein resides in the cytoskeleton. It localises to the microtubule organizing center. It is found in the centrosome. Its function is as follows. Transcription factor that binds the cAMP response element (CRE) (consensus: 5'-GTGACGT[AC][AG]-3') and displays two biological functions, as regulator of metabolic and redox processes under normal cellular conditions, and as master transcription factor during integrated stress response (ISR). Binds to asymmetric CRE's as a heterodimer and to palindromic CRE's as a homodimer. Core effector of the ISR, which is required for adaptation to various stress such as endoplasmic reticulum (ER) stress, amino acid starvation, mitochondrial stress or oxidative stress. During ISR, ATF4 translation is induced via an alternative ribosome translation re-initiation mechanism in response to EIF2S1/eIF-2-alpha phosphorylation, and stress-induced ATF4 acts as a master transcription factor of stress-responsive genes in order to promote cell recovery. Promotes the transcription of genes linked to amino acid sufficiency and resistance to oxidative stress to protect cells against metabolic consequences of ER oxidation. Activates the transcription of NLRP1, possibly in concert with other factors in response to ER stress. Activates the transcription of asparagine synthetase (ASNS) in response to amino acid deprivation or ER stress. However, when associated with DDIT3/CHOP, the transcriptional activation of the ASNS gene is inhibited in response to amino acid deprivation. Together with DDIT3/CHOP, mediates programmed cell death by promoting the expression of genes involved in cellular amino acid metabolic processes, mRNA translation and the terminal unfolded protein response (terminal UPR), a cellular response that elicits programmed cell death when ER stress is prolonged and unresolved. Activates the expression of COX7A2L/SCAF1 downstream of the EIF2AK3/PERK-mediated unfolded protein response, thereby promoting formation of respiratory chain supercomplexes and increasing mitochondrial oxidative phosphorylation. Together with DDIT3/CHOP, activates the transcription of the IRS-regulator TRIB3 and promotes ER stress-induced neuronal cell death by regulating the expression of BBC3/PUMA in response to ER stress. May cooperate with the UPR transcriptional regulator QRICH1 to regulate ER protein homeostasis which is critical for cell viability in response to ER stress. In the absence of stress, ATF4 translation is at low levels and it is required for normal metabolic processes such as embryonic lens formation, fetal liver hematopoiesis, bone development and synaptic plasticity. Acts as a regulator of osteoblast differentiation in response to phosphorylation by RPS6KA3/RSK2: phosphorylation in osteoblasts enhances transactivation activity and promotes expression of osteoblast-specific genes and post-transcriptionally regulates the synthesis of Type I collagen, the main constituent of the bone matrix. Cooperates with FOXO1 in osteoblasts to regulate glucose homeostasis through suppression of beta-cell production and decrease in insulin production. Activates transcription of SIRT4. Regulates the circadian expression of the core clock component PER2 and the serotonin transporter SLC6A4. Binds in a circadian time-dependent manner to the cAMP response elements (CRE) in the SLC6A4 and PER2 promoters and periodically activates the transcription of these genes. Mainly acts as a transcriptional activator in cellular stress adaptation, but it can also act as a transcriptional repressor: acts as a regulator of synaptic plasticity by repressing transcription, thereby inhibiting induction and maintenance of long-term memory. Regulates synaptic functions via interaction with DISC1 in neurons, which inhibits ATF4 transcription factor activity by disrupting ATF4 dimerization and DNA-binding. The sequence is that of Cyclic AMP-dependent transcription factor ATF-4 from Mus musculus (Mouse).